Consider the following 736-residue polypeptide: Ethylene receptor 2 (736 aa).

The next 3 helical transmembrane spans lie at I22–V42, V53–W73, and A94–V114. Positions 64 and 68 each coordinate Cu cation. A GAF domain is found at D157 to L305. Positions V348 to I585 constitute a Histidine kinase domain. H351 bears the Phosphohistidine; by autocatalysis mark. Positions K613–L730 constitute a Response regulatory domain. The residue at position 661 (D661) is a 4-aspartylphosphate.

The protein belongs to the ethylene receptor family. In terms of assembly, homodimer; disulfide-linked. Requires Cu cation as cofactor. Activation probably requires a transfer of a phosphate group between a His in the transmitter domain and an Asp of the receiver domain. In terms of tissue distribution, leaves, flowers and fruits.

Its subcellular location is the endoplasmic reticulum membrane. The catalysed reaction is ATP + protein L-histidine = ADP + protein N-phospho-L-histidine.. In terms of biological role, may act early in the ethylene signal transduction pathway, possibly as an ethylene receptor, or as a regulator of the pathway. This is Ethylene receptor 2 (ETR2) from Solanum lycopersicum (Tomato).